Reading from the N-terminus, the 359-residue chain is Insulin gene enhancer protein ISL-2 (359 aa).

2 LIM zinc-binding domains span residues 25 to 86 (AMCV…RLFG) and 87 to 149 (IKCA…LLER). The interval 151 to 190 (AAGSPRSPGPLPGARGLHLPDAGSGRQPSLRTHVHKQAEK) is disordered. Residues Ser154 and Ser157 each carry the phosphoserine modification. The homeobox DNA-binding region spans 191 to 250 (TTRVRTVLNEKQLHTLRTCYAANPRPDALMKEQLVEMTGLSPRVIRVWFQNKRCKDKKKS). Residues 272-301 (GTPLVAGSPIRHENAVQGSAVEVQTYQPPW) form an LIM-binding domain (LID) region. Ser279 is modified (phosphoserine). A compositionally biased stretch (low complexity) spans 326–336 (ESGSLGNSSGS). The interval 326–359 (ESGSLGNSSGSDVTSLSSQLPDTPNSMVPSPVET) is disordered. Positions 337 to 359 (DVTSLSSQLPDTPNSMVPSPVET) are enriched in polar residues.

In terms of assembly, interacts with LHX4.

Its subcellular location is the nucleus. In terms of biological role, transcriptional factor that defines subclasses of motoneurons that segregate into columns in the spinal cord and select distinct axon pathways. The polypeptide is Insulin gene enhancer protein ISL-2 (Isl2) (Mus musculus (Mouse)).